The following is a 433-amino-acid chain: 23S rRNA (uracil(1939)-C(5))-methyltransferase RlmD (433 aa).

The 59-residue stretch at 10 to 68 (RTTTRQIITVSVNDLDSFGQGVARHNGKTLFIPGLLSQENAEVTVTEDKKQYARAKVVR) folds into the TRAM domain. [4Fe-4S] cluster contacts are provided by Cys-81, Cys-87, Cys-90, and Cys-162. 6 residues coordinate S-adenosyl-L-methionine: Gln-265, Phe-294, Asn-299, Glu-315, Asn-342, and Asp-363. The active-site Nucleophile is Cys-389.

It belongs to the class I-like SAM-binding methyltransferase superfamily. RNA M5U methyltransferase family. RlmD subfamily.

The enzyme catalyses uridine(1939) in 23S rRNA + S-adenosyl-L-methionine = 5-methyluridine(1939) in 23S rRNA + S-adenosyl-L-homocysteine + H(+). In terms of biological role, catalyzes the formation of 5-methyl-uridine at position 1939 (m5U1939) in 23S rRNA. The protein is 23S rRNA (uracil(1939)-C(5))-methyltransferase RlmD of Shigella dysenteriae serotype 1 (strain Sd197).